The chain runs to 234 residues: Endonuclease V (234 aa).

Asp36 and Asp104 together coordinate Mg(2+).

This sequence belongs to the endonuclease V family. It depends on Mg(2+) as a cofactor.

Its subcellular location is the cytoplasm. It carries out the reaction Endonucleolytic cleavage at apurinic or apyrimidinic sites to products with a 5'-phosphate.. Functionally, DNA repair enzyme involved in the repair of deaminated bases. Selectively cleaves double-stranded DNA at the second phosphodiester bond 3' to a deoxyinosine leaving behind the intact lesion on the nicked DNA. The chain is Endonuclease V from Yersinia pestis.